The following is a 694-amino-acid chain: Polyphosphate kinase (694 aa).

An ATP-binding site is contributed by Asn45. Arg367 and Arg397 together coordinate Mg(2+). His427 (phosphohistidine intermediate) is an active-site residue. ATP contacts are provided by Tyr460, Arg553, and His580.

Belongs to the polyphosphate kinase 1 (PPK1) family. Mg(2+) is required as a cofactor. An intermediate of this reaction is the autophosphorylated ppk in which a phosphate is covalently linked to a histidine residue through a N-P bond.

It carries out the reaction [phosphate](n) + ATP = [phosphate](n+1) + ADP. Its function is as follows. Catalyzes the reversible transfer of the terminal phosphate of ATP to form a long-chain polyphosphate (polyP). This chain is Polyphosphate kinase, found in Campylobacter jejuni subsp. doylei (strain ATCC BAA-1458 / RM4099 / 269.97).